The chain runs to 212 residues: Pyrrolidone-carboxylate peptidase (212 aa).

Active-site residues include Glu-80, Cys-143, and His-165.

It belongs to the peptidase C15 family. In terms of assembly, homotetramer.

It is found in the cytoplasm. The enzyme catalyses Release of an N-terminal pyroglutamyl group from a polypeptide, the second amino acid generally not being Pro.. Its function is as follows. Removes 5-oxoproline from various penultimate amino acid residues except L-proline. The sequence is that of Pyrrolidone-carboxylate peptidase from Vibrio campbellii (strain ATCC BAA-1116).